The sequence spans 314 residues: MESLLHASSSLVSLRPRIDGRDSFINPSRVCLNPSLGRRGSKPLPLVAAAKKKKSKKDDNHNFSARPDEATGPFPESILLKEKKIDEEGDLLPEFADAEEKELYQFLDLQLQSDLNEERMRHYEVVYLIHEKHAEEVESINQKVQDYLKEKKGKVWRFSDWGMRRLAYKIQKAENAHYILMNFEIEAKYLNEFKGLLDSDERVIRHLVMKRDEAITEDCPPPPEFHSVRAGDEYYDDDEEEEIEEDEDEGEGEDEEDADNIEYEVDDDGNVVMVLYGDEEEGEEEEDGASEQEEGQDKSTNGRRETRRTVNVGG.

The transit peptide at 1-47 (MESLLHASSSLVSLRPRIDGRDSFINPSRVCLNPSLGRRGSKPLPLV) directs the protein to the chloroplast. Disordered regions lie at residues 49–73 (AAKK…ATGP) and 214–314 (AITE…NVGG). The segment covering 56–69 (KKDDNHNFSARPDE) has biased composition (basic and acidic residues). Acidic residues-rich tracts occupy residues 233-269 (EYYD…DDDG) and 277-294 (GDEE…EQEE). Positions 295-308 (GQDKSTNGRRETRR) are enriched in basic and acidic residues.

It belongs to the bacterial ribosomal protein bS6 family. In terms of assembly, interacts with CFM3B/SPRT2 in plastids. In terms of tissue distribution, expressed ubiquitously in roots, leaves, stems, flower buds, flowers and siliques.

It localises to the plastid. Its subcellular location is the chloroplast. Functionally, prevents non-specific action of the splicing factor CFM3b during plastid rRNA biogenesis to improve the accuracy of plastid rRNA processing. Required for plastid functions such as photosynthesis, intracellular distribution, plastid rRNAs biosynthesis and plastid gene expression in roots. Involved in a sucrose-conditional process important for the organization of root lateral and apical meristems (e.g. establishment of RAM from pericycle and symplasmic connectivity), and subsequent primary and lateral roots development. Modulates C18 unsaturated fatty acid metabolism. In Arabidopsis thaliana (Mouse-ear cress), this protein is Protein REGULATOR OF FATTY ACID COMPOSITION 3, chloroplastic.